The chain runs to 2475 residues: Non-reducing polyketide synthase ausA (2475 aa).

The tract at residues 14-253 (VLFGSKYSEI…HHADHLSAAQ (240 aa)) is N-terminal acylcarrier protein transacylase domain (SAT). The 417-residue stretch at 384 to 800 (SIPIAVTGLA…GSNAAIVLKE (417 aa)) folds into the Ketosynthase family 3 (KS3) domain. Catalysis depends on for beta-ketoacyl synthase activity residues Cys-549, His-684, and His-723. A malonyl-CoA:ACP transacylase (MAT) domain region spans residues 910–1212 (LCFGGQTGNK…CPMDLSGPQA (303 aa)). Catalysis depends on Ser-997, which acts as the For acyl/malonyl transferase activity. Residues 1279 to 1407 (EDLKLVQLLK…GTISLSPGAD (129 aa)) form an N-terminal hotdog fold region. Residues 1279–1586 (EDLKLVQLLK…FTSVSIQSLR (308 aa)) form the PKS/mFAS DH domain. The segment at 1282-1585 (KLVQLLKNEG…TFTSVSIQSL (304 aa)) is product template (PT) domain. Residue His-1312 is the Proton acceptor; for dehydratase activity of the active site. The tract at residues 1435 to 1586 (SSSGLKRSTV…FTSVSIQSLR (152 aa)) is C-terminal hotdog fold. The Proton donor; for dehydratase activity role is filled by Asp-1493. One can recognise a Carrier domain in the interval 1626–1703 (SSNGDDLRTV…ALVQRIFPGR (78 aa)). Residue Ser-1663 is modified to O-(pantetheine 4'-phosphoryl)serine. A methyltransferase (CMeT) domain region spans residues 1865 to 2098 (QHTSEHKLLH…GFNWVDWTDN (234 aa)). Residues 2127–2475 (SAIHEETVVY…YEFLRSHVGL (349 aa)) are thioesterase (TE) domain. Residues Ser-2250, Asp-2412, and His-2444 each act as for thioesterase activity in the active site.

The enzyme catalyses 3 malonyl-CoA + acetyl-CoA + 2 S-adenosyl-L-methionine = 3,5-dimethylorsellinate + 2 S-adenosyl-L-homocysteine + 3 CO2 + 4 CoA. It participates in secondary metabolite biosynthesis; terpenoid biosynthesis. Non-reducing polyketide synthase; part of the gene cluster A that mediates the biosynthesis of the fungal meroterpenoid acetoxydehydroaustin. The first step of the pathway is the synthesis of 3,5-dimethylorsellinic acid by the polyketide synthase ausA. 3,5-dimethylorsellinic acid is then prenylated by the polyprenyl transferase ausN. Further epoxidation by the FAD-dependent monooxygenase ausM and cyclization by the probable terpene cyclase ausL lead to the formation of protoaustinoid A. Protoaustinoid A is then oxidized to spiro-lactone preaustinoid A3 by the combined action of the FAD-binding monooxygenases ausB and ausC, and the dioxygenase ausE. Acid-catalyzed keto-rearrangement and ring contraction of the tetraketide portion of preaustinoid A3 by ausJ lead to the formation of preaustinoid A4. The aldo-keto reductase ausK, with the help of ausH, is involved in the next step by transforming preaustinoid A4 into isoaustinone which is in turn hydroxylated by the P450 monooxygenase ausI to form austinolide. The cytochrome P450 monooxygenase ausG then modifies austinolide to austinol. Austinol is further acetylated to austin by the O-acetyltransferase ausP, which spontaneously changes to dehydroaustin. The cytochrome P450 monooxygenase then converts dehydroaustin is into 7-dehydrodehydroaustin. The hydroxylation catalyzed by ausR permits the second O-acetyltransferase ausQ to add an additional acetyl group to the molecule, leading to the formation of acetoxydehydroaustin. Due to genetic rearrangements of the clusters and the subsequent loss of some enzymes, the end product of the Penicillium brasilianum austinoid biosynthesis clusters is acetoxydehydroaustin. The protein is Non-reducing polyketide synthase ausA of Penicillium brasilianum.